A 265-amino-acid polypeptide reads, in one-letter code: 2-Cys peroxiredoxin BAS1, chloroplastic (265 aa).

Residues 1–65 (MACVASSTTL…SSTSRRSFAV (65 aa)) constitute a chloroplast transit peptide. The region spanning 73–232 (PLVGNKAPDF…TMRTLQALQY (160 aa)) is the Thioredoxin domain. Catalysis depends on C119, which acts as the Cysteine sulfenic acid (-SOH) intermediate.

Belongs to the peroxiredoxin family. AhpC/Prx1 subfamily. Homodimer; disulfide-linked, upon oxidation.

The protein localises to the plastid. It localises to the chloroplast. The enzyme catalyses a hydroperoxide + [thioredoxin]-dithiol = an alcohol + [thioredoxin]-disulfide + H2O. Functionally, thiol-specific peroxidase that catalyzes the reduction of hydrogen peroxide and organic hydroperoxides to water and alcohols, respectively. Plays a role in cell protection against oxidative stress by detoxifying peroxides. May be an antioxidant enzyme particularly in the developing shoot and photosynthesizing leaf. The chain is 2-Cys peroxiredoxin BAS1, chloroplastic (BAS1) from Spinacia oleracea (Spinach).